The sequence spans 469 residues: Sulfate adenylyltransferase subunit 1 (469 aa).

One can recognise a tr-type G domain in the interval 22 to 224 (KDLMRFITCG…NMTWYPGSPL (203 aa)). Positions 31–38 (GSVDDGKS) are G1. 31 to 38 (GSVDDGKS) contacts GTP. Positions 89 to 93 (GITID) are G2. The G3 stretch occupies residues 110-113 (DTPG). GTP contacts are provided by residues 110–114 (DTPGH) and 165–168 (NKMD). The G4 stretch occupies residues 165–168 (NKMD). A G5 region spans residues 202 to 204 (SAL).

It belongs to the TRAFAC class translation factor GTPase superfamily. Classic translation factor GTPase family. CysN/NodQ subfamily. Heterodimer composed of CysD, the smaller subunit, and CysN.

It carries out the reaction sulfate + ATP + H(+) = adenosine 5'-phosphosulfate + diphosphate. It participates in sulfur metabolism; hydrogen sulfide biosynthesis; sulfite from sulfate: step 1/3. With CysD forms the ATP sulfurylase (ATPS) that catalyzes the adenylation of sulfate producing adenosine 5'-phosphosulfate (APS) and diphosphate, the first enzymatic step in sulfur assimilation pathway. APS synthesis involves the formation of a high-energy phosphoric-sulfuric acid anhydride bond driven by GTP hydrolysis by CysN coupled to ATP hydrolysis by CysD. In Psychromonas ingrahamii (strain DSM 17664 / CCUG 51855 / 37), this protein is Sulfate adenylyltransferase subunit 1.